The primary structure comprises 463 residues: Tryptophan aminotransferase-related protein 4 (463 aa).

Residues 6–26 (LLLIVSIILNLVFTIHILYYS) traverse the membrane as a helical segment. Residues Tyr-124, 163 to 164 (TT), Asn-239, 259 to 262 (DYAY), 282 to 285 (SLSK), and Arg-293 each bind pyridoxal 5'-phosphate. An N6-(pyridoxal phosphate)lysine modification is found at Lys-285.

Belongs to the alliinase family. Pyridoxal 5'-phosphate is required as a cofactor.

It localises to the membrane. Its function is as follows. Probable aminotransferase. The polypeptide is Tryptophan aminotransferase-related protein 4 (TAR4) (Arabidopsis thaliana (Mouse-ear cress)).